The primary structure comprises 263 residues: Hydroxyethylthiazole kinase (263 aa).

Substrate is bound at residue Met45. ATP-binding residues include Arg121 and Ser167. Residue Gly194 coordinates substrate.

The protein belongs to the Thz kinase family. Requires Mg(2+) as cofactor.

The catalysed reaction is 5-(2-hydroxyethyl)-4-methylthiazole + ATP = 4-methyl-5-(2-phosphooxyethyl)-thiazole + ADP + H(+). The protein operates within cofactor biosynthesis; thiamine diphosphate biosynthesis; 4-methyl-5-(2-phosphoethyl)-thiazole from 5-(2-hydroxyethyl)-4-methylthiazole: step 1/1. Functionally, catalyzes the phosphorylation of the hydroxyl group of 4-methyl-5-beta-hydroxyethylthiazole (THZ). This chain is Hydroxyethylthiazole kinase, found in Vibrio parahaemolyticus serotype O3:K6 (strain RIMD 2210633).